The primary structure comprises 87 residues: Large ribosomal subunit protein bL27 (87 aa).

The interval 1–21 is disordered; sequence MAHKKAGGSSRNGRDSESKRL.

The protein belongs to the bacterial ribosomal protein bL27 family.

In Aromatoleum aromaticum (strain DSM 19018 / LMG 30748 / EbN1) (Azoarcus sp. (strain EbN1)), this protein is Large ribosomal subunit protein bL27.